Here is a 369-residue protein sequence, read N- to C-terminus: MEITNVNEYEAIAKQKLPKMVYDYYASGAEDQWTLAENRNAFSRILFRPRILIDVTNIDMTTTILGFKISMPIMIAPTAMQKMAHPEGEYATARAASAAGTIMTLSSWATSSVEEVASTGPGIRFFQLYVYKDRNVVAQLVRRAERAGFKAIALTVDTPRLGRREADIKNRFVLPPFLTLKNFEGIDLGKMDKANDSGLSSYVAGQIDRSLSWKDVAWLQTITSLPILVKGVITAEDARLAVQHGAAGIIVSNHGARQLDYVPATIMALEEVVKAAQGRIPVFLDGGVRRGTDVFKALALGAAGVFIGRPVVFSLAAEGEAGVKKVLQMMRDEFELTMALSGCRSLKEISRSHIAADWDGPSSRAVARL.

Methionine 1 is modified (N-acetylmethionine). Positions 1–359 (MEITNVNEYE…SRSHIAADWD (359 aa)) constitute an FMN hydroxy acid dehydrogenase domain. Residue tyrosine 24 coordinates glyoxylate. FMN contacts are provided by residues 77–79 (PTA), serine 106, 127–129 (QLY), and threonine 155. Residue tyrosine 129 participates in glyoxylate binding. Position 164 (arginine 164) interacts with glyoxylate. Residues lysine 230 and serine 252 each contribute to the FMN site. Residues histidine 254 and arginine 257 each contribute to the glyoxylate site. The Proton acceptor role is filled by histidine 254. FMN-binding positions include 285-289 (DGGVR) and 308-309 (GR). A Microbody targeting signal motif is present at residues 367–369 (ARL).

The protein belongs to the FMN-dependent alpha-hydroxy acid dehydrogenase family. As to quaternary structure, homotetramer. FMN serves as cofactor.

Its subcellular location is the peroxisome. It catalyses the reaction glycolate + O2 = glyoxylate + H2O2. It carries out the reaction a (2S)-2-hydroxycarboxylate + O2 = a 2-oxocarboxylate + H2O2. It functions in the pathway photosynthesis; photorespiration; glycine from 2-phosphoglycolate: step 2/3. In terms of biological role, catalyzes the oxidation of glycolate to glyoxylate, with a reduction of O2 to H2O2. Is a key enzyme in photorespiration in green plants. To a lesser extent, is also able to use L-lactate and 2-hydroxbyutanoate as substrate in vitro, but shows almost no activity with L-mandelate. This is Glycolate oxidase from Spinacia oleracea (Spinach).